Here is a 147-residue protein sequence, read N- to C-terminus: Small ribosomal subunit protein bS6 (147 aa).

Positions A103–E147 are disordered. Over residues G133–E147 the composition is skewed to acidic residues.

This sequence belongs to the bacterial ribosomal protein bS6 family.

Its function is as follows. Binds together with bS18 to 16S ribosomal RNA. The protein is Small ribosomal subunit protein bS6 of Syntrophobacter fumaroxidans (strain DSM 10017 / MPOB).